Reading from the N-terminus, the 1326-residue chain is MINKILIKLITIIIFCFSFLFAEEDLIRTPPGYYNLTRHKRYPHITEYQSSQDTDLYYPDVCRNALRNDIIPGVDEFFPFLFPGFNSDGPNSIYIQKNSSLLFKSESLGTTYNFVAVCVEGSFTVKGSMFFTINSLIILPGGRFESEAGIEFYDENDPLHIYNNPDFPKDPFGFFPGILVLGGTISVVAKESLVYRADRISNSSIEISPPFSPMNKINQTIRIFTELYPLGFYCSFSSDLERKILSLLDCLPISENDKIIRVLIEVDRDQNVSPTNILKKGKTTKGSIYITGDSNVYFKNMFFKNLGFTTNEPYNDTKLIFSPNDPNQVTDIIMGTNQRFRSSLYIEFSKNVTIDGCAFFEDNLTRSPLVLFDSNVIISNSLISSKSGSNIIAQYGTESIQSSNNSYILVKIDTASLDVDQNNNNNNNNNNNNNNNNNNNNNNNNNNNNNNNNNNNNNNNMDYGNQGNGIYSISPNINSNGDSFFGQQYAFNYYFISKNSVNSNQDNSSLLNSKPIELIIIDSSFNPTNSNGSLNKYLLNINSDGNKTISTYLVCNSIIEYYSGWLMDNLNSNQQISFEGNLFQNGCNKVDGNCTISQNSKYSTDLPKVANQTKFDEIVQLDKLFSNGITSINPNEKVIISTKINSKIHYYQIQLFFTHLPIDDQPTPLSIYIENQPVFLLEPIKSTFPTFNNFTFKFENKNSLDKINIAFTTRGDIYLTSMATYSSIVVEPPTETPTETPTETPTETPTDTPTQTPTQTPILTSKPITQISVDRNENLELKIALPICLSLALLIGIIIMICIFKKVQSNSKLKKDDDENEMATIKEGNKSIIVSQPPTVIEEKPQDNSKPDDQKLIERDQQINNPILKIREYPSLKDIELSNEETKSPQYGSLNSFSTLQFSRQYDYGSEEFPFQFNKQVLEFNLNGRKCMNDEVINDSLMIHNKSEITYLVNIIFPQNIETGCVSILNVEIFNESFELLPHCTTEVKFSLTLTCTTKFLENFAVLVEAQGSKCHTFLSVHVESETSLKLDYKEIKTEQLIASYLPSKVYVFKGYYRDLAVAVKKFAISDNSKSFEKIKNEVQILSKVNNINVVRYIGSAQNISHVCIVTEYAKEGSLGSLIHDSKIKLSFIQKVKFMLDAAKGFTFLHASEIVHGDIKPDNLLVFSKEISGVCVKICDFGNSEELGEKESKSKPDSTMNYLPNEVFDGEGYQKSADVYAFGVSLYEVMVEKIPFHEICYNDIPNRVQDGFRPTADLDTIDDDIRKIIECCWIKEKSKRPSFSEISLHLEIKFSKLLHQMNESEESTSNHNTNSKTKEDKDLDEN.

The first 22 residues, 1–22 (MINKILIKLITIIIFCFSFLFA), serve as a signal peptide directing secretion. The Extracellular segment spans residues 23–782 (EEDLIRTPPG…VDRNENLELK (760 aa)). Disordered stretches follow at residues 419-467 (VDQN…GNQG) and 731-762 (EPPT…QTPI). Composition is skewed to low complexity over residues 422–460 (NNNN…NNNN) and 731–761 (EPPT…TQTP). The helical transmembrane segment at 783 to 803 (IALPICLSLALLIGIIIMICI) threads the bilayer. The Cytoplasmic portion of the chain corresponds to 804 to 1326 (FKKVQSNSKL…TKEDKDLDEN (523 aa)). The tract at residues 833–858 (IVSQPPTVIEEKPQDNSKPDDQKLIE) is disordered. Basic and acidic residues predominate over residues 841–858 (IEEKPQDNSKPDDQKLIE). A Protein kinase domain is found at 1036-1292 (IKTEQLIASY…FSEISLHLEI (257 aa)). ATP contacts are provided by residues 1042–1050 (IASYLPSKV) and K1065. Residue D1158 is the Proton acceptor of the active site. The tract at residues 1301–1326 (MNESEESTSNHNTNSKTKEDKDLDEN) is disordered. A compositionally biased stretch (basic and acidic residues) spans 1316 to 1326 (KTKEDKDLDEN).

It in the N-terminal section; belongs to the GDT family. In the C-terminal section; belongs to the protein kinase superfamily. TKL Ser/Thr protein kinase family.

The protein resides in the membrane. The enzyme catalyses L-seryl-[protein] + ATP = O-phospho-L-seryl-[protein] + ADP + H(+). The catalysed reaction is L-threonyl-[protein] + ATP = O-phospho-L-threonyl-[protein] + ADP + H(+). This Dictyostelium discoideum (Social amoeba) protein is Probable serine/threonine-protein kinase gdt8 (gdt8).